Reading from the N-terminus, the 345-residue chain is NADPH dehydrogenase (345 aa).

FMN is bound at residue 23-26; sequence SPMC. Residue tyrosine 28 participates in substrate binding. Residues alanine 60 and glutamine 102 each coordinate FMN. 164–167 contacts substrate; that stretch reads HGAH. FMN is bound by residues arginine 215 and 307–308; that span reads GR.

This sequence belongs to the NADH:flavin oxidoreductase/NADH oxidase family. NamA subfamily. In terms of assembly, homotetramer. It depends on FMN as a cofactor.

It catalyses the reaction A + NADPH + H(+) = AH2 + NADP(+). Functionally, catalyzes the reduction of the double bond of an array of alpha,beta-unsaturated aldehydes and ketones. It also reduces the nitro group of nitroester and nitroaromatic compounds. It could have a role in detoxification processes. The polypeptide is NADPH dehydrogenase (Bacillus cereus (strain ATCC 10987 / NRS 248)).